A 429-amino-acid chain; its full sequence is Ribosomal RNA small subunit methyltransferase B (429 aa).

Residues 254 to 260 (CAAPGGK), aspartate 277, aspartate 303, and aspartate 322 contribute to the S-adenosyl-L-methionine site. The Nucleophile role is filled by cysteine 375.

The protein belongs to the class I-like SAM-binding methyltransferase superfamily. RsmB/NOP family.

The protein localises to the cytoplasm. The catalysed reaction is cytidine(967) in 16S rRNA + S-adenosyl-L-methionine = 5-methylcytidine(967) in 16S rRNA + S-adenosyl-L-homocysteine + H(+). Functionally, specifically methylates the cytosine at position 967 (m5C967) of 16S rRNA. This Shigella sonnei (strain Ss046) protein is Ribosomal RNA small subunit methyltransferase B.